The chain runs to 295 residues: Sulfotransferase 1 family member D1 (295 aa).

A 3'-phosphoadenylyl sulfate-binding site is contributed by 48-53; that stretch reads KSGTTW. Substrate contacts are provided by residues F81 and 106–108; that span reads KTH. The Proton acceptor role is filled by H108. 3'-phosphoadenylyl sulfate is bound by residues R130 and S138. F142 provides a ligand contact to substrate. Residues Y193, 227 to 232, and 257 to 259 contribute to the 3'-phosphoadenylyl sulfate site; these read SSFSVM and RKG.

This sequence belongs to the sulfotransferase 1 family. In terms of tissue distribution, detected in kidney and liver. Detected in kidney collecting duct cells.

The protein localises to the cytoplasm. Sulfotransferase with broad substrate specificity that utilizes 3'-phospho-5'-adenylyl sulfate (PAPS) as sulfonate donor to catalyze the sulfate conjugation of catecholamines, such as dopamine, prostaglandins, leukotriene E4, drugs and xenobiotic compounds. Has sulfotransferase activity towards p-nitrophenol, 2-naphthylamine and minoxidil (in vitro). Sulfonation increases the water solubility of most compounds, and therefore their renal excretion, but it can also result in bioactivation to form active metabolites. The polypeptide is Sulfotransferase 1 family member D1 (Sult1d1) (Mus musculus (Mouse)).